Here is a 247-residue protein sequence, read N- to C-terminus: V-type proton ATPase subunit D (247 aa).

Belongs to the V-ATPase D subunit family. As to quaternary structure, V-ATPase is a heteromultimeric enzyme made up of two complexes: the ATP-hydrolytic V1 complex and the proton translocation V0 complex. The V1 complex consists of three catalytic AB heterodimers that form a heterohexamer, three peripheral stalks each consisting of EG heterodimers, one central rotor including subunits D and F, and the regulatory subunits C and H. The proton translocation complex V0 consists of the proton transport subunit a, a ring of proteolipid subunits c9c'', rotary subunit d, subunits e and f, and the accessory subunits ATP6AP1/Ac45 and ATP6AP2/PRR. Interacts with SNX10. In terms of tissue distribution, expressed in brain (at protein level). Present in tissues active in secretion. Amounts elevated in brain, kidney and testis.

Its subcellular location is the membrane. The protein resides in the cytoplasmic vesicle. It localises to the clathrin-coated vesicle membrane. The protein localises to the cytoplasm. It is found in the cytoskeleton. Its subcellular location is the microtubule organizing center. The protein resides in the centrosome. It localises to the cell projection. The protein localises to the cilium. Subunit of the V1 complex of vacuolar(H+)-ATPase (V-ATPase), a multisubunit enzyme composed of a peripheral complex (V1) that hydrolyzes ATP and a membrane integral complex (V0) that translocates protons. V-ATPase is responsible for acidifying and maintaining the pH of intracellular compartments and in some cell types, is targeted to the plasma membrane, where it is responsible for acidifying the extracellular environment. May play a role in cilium biogenesis through regulation of the transport and the localization of proteins to the cilium. The chain is V-type proton ATPase subunit D (ATP6V1D) from Bos taurus (Bovine).